The following is a 238-amino-acid chain: Ribitol-5-phosphate cytidylyltransferase (238 aa).

Residues 7 to 10 (FAGG) and 80 to 86 (GETGQES) contribute to the CTP site.

The protein belongs to the IspD/TarI cytidylyltransferase family. TarI subfamily.

It catalyses the reaction D-ribitol 5-phosphate + CTP + H(+) = CDP-L-ribitol + diphosphate. In terms of biological role, catalyzes the transfer of the cytidylyl group of CTP to D-ribitol 5-phosphate. This chain is Ribitol-5-phosphate cytidylyltransferase, found in Vibrio parahaemolyticus serotype O3:K6 (strain RIMD 2210633).